Here is a 728-residue protein sequence, read N- to C-terminus: 1,4-alpha-glucan branching enzyme GlgB (728 aa).

D405 functions as the Nucleophile in the catalytic mechanism. The active-site Proton donor is the E458.

It belongs to the glycosyl hydrolase 13 family. GlgB subfamily. Monomer.

The catalysed reaction is Transfers a segment of a (1-&gt;4)-alpha-D-glucan chain to a primary hydroxy group in a similar glucan chain.. It participates in glycan biosynthesis; glycogen biosynthesis. Its function is as follows. Catalyzes the formation of the alpha-1,6-glucosidic linkages in glycogen by scission of a 1,4-alpha-linked oligosaccharide from growing alpha-1,4-glucan chains and the subsequent attachment of the oligosaccharide to the alpha-1,6 position. In Salmonella paratyphi A (strain ATCC 9150 / SARB42), this protein is 1,4-alpha-glucan branching enzyme GlgB.